The chain runs to 310 residues: HTH-type transcriptional regulator CbbR (310 aa).

Positions 7-64 (ITLKQLRALVAVAGSASLTGGATRLGLTPPAIHSQIRNLEEAFGVPLLHRPPETGSFT) constitute an HTH lysR-type domain. Positions 24 to 43 (LTGGATRLGLTPPAIHSQIR) form a DNA-binding region, H-T-H motif.

Belongs to the LysR transcriptional regulatory family.

In terms of biological role, transcriptional activator for the cbb operon for RuBisCO and other Calvin cycle genes. The polypeptide is HTH-type transcriptional regulator CbbR (cbbR) (Cereibacter sphaeroides (Rhodobacter sphaeroides)).